The primary structure comprises 415 residues: Protein-lysine N-trimethyltransferase SMYD5 (415 aa).

The 332-residue stretch at 20 to 351 (NCVDVRFINN…PGEEICISYL (332 aa)) folds into the SET domain. An MYND-type zinc finger spans residues 95 to 135 (PHPELCKVRPDRHQACPQCQVMYCSSECRQAAMDQYHKILC). Tyr-350 provides a ligand contact to S-adenosyl-L-methionine. A disordered region spans residues 388 to 415 (DMTSEDEEEVEGEGETEGEDMEDEMTDV).

This sequence belongs to the class V-like SAM-binding methyltransferase superfamily. In terms of tissue distribution, expressed at high levels in the ovary and at lower levels in the fin, testis and brain.

The protein localises to the cytoplasm. The catalysed reaction is L-lysyl-[protein] + 3 S-adenosyl-L-methionine = N(6),N(6),N(6)-trimethyl-L-lysyl-[protein] + 3 S-adenosyl-L-homocysteine + 3 H(+). The enzyme catalyses L-lysyl(20)-[histone H4] + 3 S-adenosyl-L-methionine = N(6),N(6),N(6)-trimethyl-L-lysyl(20)-[histone H4] + 3 S-adenosyl-L-homocysteine + 3 H(+). It carries out the reaction L-lysyl(36)-[histone H3] + 3 S-adenosyl-L-methionine = N(6),N(6),N(6)-trimethyl-L-lysyl(36)-[histone H3] + 3 S-adenosyl-L-homocysteine + 3 H(+). Protein-lysine N-trimethyltransferase that specifically catalyzes trimethylation of 'Lys-22' of the RPL40/eL40 subunit of the 60S ribosome, thereby promoting translation elongation and protein synthesis. May also act as a histone methyltransferase in the context of histone octamers, but not on nucleosome substrates: trimethylates 'Lys-36' of histone H3 and 'Lys-20' of histone H4 to form H3K36me3 and H4K20me3, respectively. The histone methyltransferase activity, which is independent of its SET domain, is however unsure in vivo. Plays a crucial role in hematopoiesis during embryogenesis by negatively regulating expression of genes related to both primitive and definitive hematopoiesis. The polypeptide is Protein-lysine N-trimethyltransferase SMYD5 (Danio rerio (Zebrafish)).